The following is a 352-amino-acid chain: MQELRLVLIIVGALAISALLLHGLWTSRKEKPAKFGEKPLGKLDDSNRDTEGFDHTGVGSVRIINNAPEKDVAVHTSQRKEPELHFGEKIHADPLMDSPASVQVIDDMADLPRMSATSEKIEPKFSSDSVVPDPVATAVEEEPVRIAVEQPIQSEPASVVSDYTEVLNTPISDIPEVSEQEVKPEENKVLEPEPVIANVVPEPEPEPEPEPEPVLAPSYIALSVHARNGEMLQGAKLFQCLEQHNLIFGENAVYHRHADLAGTEPVLFSATNMVQPGNFPEDGGYNFETPGVSFYLMLPCYGSAKNNFNLMLQTVQRIADDLNADVLDHERAMVTPNRIAQYREKAKLYSQA.

Over M1–R5 the chain is Periplasmic. Residues L6 to T26 form a helical membrane-spanning segment. Over S27–A352 the chain is Cytoplasmic. The span at F35–D54 shows a compositional bias: basic and acidic residues. The interval F35–T56 is disordered.

It belongs to the ZipA family. In terms of assembly, interacts with FtsZ via their C-terminal domains.

The protein resides in the cell inner membrane. In terms of biological role, essential cell division protein that stabilizes the FtsZ protofilaments by cross-linking them and that serves as a cytoplasmic membrane anchor for the Z ring. Also required for the recruitment to the septal ring of downstream cell division proteins. This Photobacterium profundum (strain SS9) protein is Cell division protein ZipA.